The primary structure comprises 76 residues: uncharacterized protein (76 aa).

This is an uncharacterized protein from Treponema pallidum (strain Nichols).